The chain runs to 345 residues: Holliday junction branch migration complex subunit RuvB (345 aa).

A large ATPase domain (RuvB-L) region spans residues 4–194 (TDKLFGAAPE…FGIVARLEFY (191 aa)). Residues Leu33, Arg34, Gly75, Lys78, Thr79, Thr80, 141–143 (EDY), Arg184, Tyr194, and Arg231 each bind ATP. Thr79 provides a ligand contact to Mg(2+). Residues 195 to 265 (NAEELTRIVS…VADAALAMLD (71 aa)) are small ATPAse domain (RuvB-S). The tract at residues 268–345 (PAGLDVMDRK…LHFGLPVKDA (78 aa)) is head domain (RuvB-H). Residues Arg323 and Arg328 each coordinate DNA.

This sequence belongs to the RuvB family. As to quaternary structure, homohexamer. Forms an RuvA(8)-RuvB(12)-Holliday junction (HJ) complex. HJ DNA is sandwiched between 2 RuvA tetramers; dsDNA enters through RuvA and exits via RuvB. An RuvB hexamer assembles on each DNA strand where it exits the tetramer. Each RuvB hexamer is contacted by two RuvA subunits (via domain III) on 2 adjacent RuvB subunits; this complex drives branch migration. In the full resolvosome a probable DNA-RuvA(4)-RuvB(12)-RuvC(2) complex forms which resolves the HJ.

The protein localises to the cytoplasm. It catalyses the reaction ATP + H2O = ADP + phosphate + H(+). Functionally, the RuvA-RuvB-RuvC complex processes Holliday junction (HJ) DNA during genetic recombination and DNA repair, while the RuvA-RuvB complex plays an important role in the rescue of blocked DNA replication forks via replication fork reversal (RFR). RuvA specifically binds to HJ cruciform DNA, conferring on it an open structure. The RuvB hexamer acts as an ATP-dependent pump, pulling dsDNA into and through the RuvAB complex. RuvB forms 2 homohexamers on either side of HJ DNA bound by 1 or 2 RuvA tetramers; 4 subunits per hexamer contact DNA at a time. Coordinated motions by a converter formed by DNA-disengaged RuvB subunits stimulates ATP hydrolysis and nucleotide exchange. Immobilization of the converter enables RuvB to convert the ATP-contained energy into a lever motion, pulling 2 nucleotides of DNA out of the RuvA tetramer per ATP hydrolyzed, thus driving DNA branch migration. The RuvB motors rotate together with the DNA substrate, which together with the progressing nucleotide cycle form the mechanistic basis for DNA recombination by continuous HJ branch migration. Branch migration allows RuvC to scan DNA until it finds its consensus sequence, where it cleaves and resolves cruciform DNA. This Chromobacterium violaceum (strain ATCC 12472 / DSM 30191 / JCM 1249 / CCUG 213 / NBRC 12614 / NCIMB 9131 / NCTC 9757 / MK) protein is Holliday junction branch migration complex subunit RuvB.